The primary structure comprises 306 residues: Ribonuclease Z (306 aa).

7 residues coordinate Zn(2+): His-63, His-65, Asp-67, His-68, His-140, Asp-211, and His-269. The active-site Proton acceptor is Asp-67.

It belongs to the RNase Z family. As to quaternary structure, homodimer. Zn(2+) serves as cofactor.

It catalyses the reaction Endonucleolytic cleavage of RNA, removing extra 3' nucleotides from tRNA precursor, generating 3' termini of tRNAs. A 3'-hydroxy group is left at the tRNA terminus and a 5'-phosphoryl group is left at the trailer molecule.. In terms of biological role, zinc phosphodiesterase, which displays some tRNA 3'-processing endonuclease activity. Probably involved in tRNA maturation, by removing a 3'-trailer from precursor tRNA. This is Ribonuclease Z from Listeria welshimeri serovar 6b (strain ATCC 35897 / DSM 20650 / CCUG 15529 / CIP 8149 / NCTC 11857 / SLCC 5334 / V8).